Here is a 633-residue protein sequence, read N- to C-terminus: uncharacterized protein (633 aa).

This is an uncharacterized protein from Archaeoglobus fulgidus (strain ATCC 49558 / DSM 4304 / JCM 9628 / NBRC 100126 / VC-16).